The chain runs to 30 residues: V-type proton ATPase catalytic subunit A isoform 1 (30 aa).

This sequence belongs to the ATPase alpha/beta chains family. As to quaternary structure, V-ATPase is a heteromultimeric enzyme composed of a peripheral catalytic V1 complex (main components: subunits A, B, C, D, E, and F) attached to an integral membrane V0 proton pore complex (main component: the proteolipid protein).

The catalysed reaction is ATP + H2O + 4 H(+)(in) = ADP + phosphate + 5 H(+)(out). In terms of biological role, catalytic subunit of the peripheral V1 complex of vacuolar ATPase. V-ATPase vacuolar ATPase is responsible for acidifying a variety of intracellular compartments in eukaryotic cells. This chain is V-type proton ATPase catalytic subunit A isoform 1, found in Psilotum nudum (Whisk fern).